The following is a 568-amino-acid chain: Keratin, type I cytoskeletal 10 (568 aa).

The segment covering 1 to 15 has biased composition (low complexity); it reads MSVRYSSSKQYSSSR. The disordered stretch occupies residues 1-31; it reads MSVRYSSSKQYSSSRSGGGGGGGGGSSFRIS. Residues 1-135 form a head region; it reads MSVRYSSSKQ…GGDGGLLSGN (135 aa). Serine 14, serine 16, serine 36, serine 47, serine 50, and serine 160 each carry phosphoserine. A compositionally biased stretch (gly residues) spans 16–26; the sequence is SGGGGGGGGGS. The segment at 136–171 is coil 1A; that stretch reads EKVTMQNLNDRLASYLDKVRALEESNYELEGKIKEW. Positions 136-450 constitute an IF rod domain; the sequence is EKVTMQNLND…SLLEGEGSSG (315 aa). The linker 1 stretch occupies residues 172 to 192; the sequence is YEKHGNSSQRAPRDYSKYYQT. Residues 193–284 form a coil 1B region; the sequence is IEDLKNQILN…KNHEEEMRDL (92 aa). The interval 285–307 is linker 12; that stretch reads QNVSTGDVNVEMNAAPGVDLTEL. A coil 2 region spans residues 308–446; that stretch reads LNNMRNQYEQ…QTYRSLLEGE (139 aa). The tract at residues 447-568 is tail; the sequence is GSSGGGGYGG…GESSSKGPRY (122 aa). Positions 485 to 546 are enriched in gly residues; sequence GGGSSGGGGH…GGGYGGGSSS (62 aa). The disordered stretch occupies residues 485–568; that stretch reads GGGSSGGGGH…GESSSKGPRY (84 aa). Residues 547 to 568 show a composition bias toward low complexity; it reads SGGHKSSSSGSVGESSSKGPRY.

It belongs to the intermediate filament family. Heterotetramer of two type I and two type II keratins. Heterodimer with KRT1. Two heterodimers of KRT1 and KRT10 form a heterotetramer. The KRT10 subunit in the heterotetramer is probably disulfide-linked. Expressed in skin.

The protein localises to the secreted. It localises to the extracellular space. Its subcellular location is the cell surface. It is found in the cytoplasm. In terms of biological role, plays a role in the establishment of the epidermal barrier on plantar skin. Involved in the maintenance of cell layer development and keratin filament bundles in suprabasal cells of the epithelium. The protein is Keratin, type I cytoskeletal 10 of Canis lupus familiaris (Dog).